The sequence spans 184 residues: Probable RNA 2'-phosphotransferase (184 aa).

Belongs to the KptA/TPT1 family.

Functionally, removes the 2'-phosphate from RNA via an intermediate in which the phosphate is ADP-ribosylated by NAD followed by a presumed transesterification to release the RNA and generate ADP-ribose 1''-2''-cyclic phosphate (APPR&gt;P). May function as an ADP-ribosylase. The protein is Probable RNA 2'-phosphotransferase of Shigella boydii serotype 18 (strain CDC 3083-94 / BS512).